Reading from the N-terminus, the 286-residue chain is Bifunctional protein FolD (286 aa).

NADP(+)-binding positions include 164 to 166, isoleucine 189, and isoleucine 230; that span reads GAS.

The protein belongs to the tetrahydrofolate dehydrogenase/cyclohydrolase family. In terms of assembly, homodimer.

The enzyme catalyses (6R)-5,10-methylene-5,6,7,8-tetrahydrofolate + NADP(+) = (6R)-5,10-methenyltetrahydrofolate + NADPH. It carries out the reaction (6R)-5,10-methenyltetrahydrofolate + H2O = (6R)-10-formyltetrahydrofolate + H(+). Its pathway is one-carbon metabolism; tetrahydrofolate interconversion. Functionally, catalyzes the oxidation of 5,10-methylenetetrahydrofolate to 5,10-methenyltetrahydrofolate and then the hydrolysis of 5,10-methenyltetrahydrofolate to 10-formyltetrahydrofolate. This Wolinella succinogenes (strain ATCC 29543 / DSM 1740 / CCUG 13145 / JCM 31913 / LMG 7466 / NCTC 11488 / FDC 602W) (Vibrio succinogenes) protein is Bifunctional protein FolD.